The primary structure comprises 486 residues: Homoserine O-acetyltransferase (486 aa).

The AB hydrolase-1 domain maps to 66-436 (NVLVICHALT…PEGHDAFLLE (371 aa)). The active-site Nucleophile is Ser162. Positions 248-281 (KFSRRSPSIAQQQKAQREETRKPSTVSEHSLQIH) are disordered. Polar residues-rich tracts occupy residues 250–261 (SRRSPSIAQQQK) and 270–280 (PSTVSEHSLQI). Active-site residues include Asp401 and His430.

Belongs to the AB hydrolase superfamily. MetX family.

It localises to the cytoplasm. The enzyme catalyses L-homoserine + acetyl-CoA = O-acetyl-L-homoserine + CoA. The protein operates within amino-acid biosynthesis; L-methionine biosynthesis via de novo pathway; O-acetyl-L-homoserine from L-homoserine: step 1/1. Functionally, commits homoserine to the methionine biosynthesis pathway by catalyzing its O-acetylation. The polypeptide is Homoserine O-acetyltransferase (MET2) (Saccharomyces cerevisiae (strain ATCC 204508 / S288c) (Baker's yeast)).